The following is a 147-amino-acid chain: Two-component response regulator ORR11 (147 aa).

The Response regulatory domain occupies 29–146; it reads HVLAVDDSSV…DVSRLFSRVL (118 aa). At Asp-79 the chain carries 4-aspartylphosphate.

Belongs to the ARR family. Type-A subfamily. In terms of processing, two-component system major event consists of a His-to-Asp phosphorelay between a sensor histidine kinase (HK) and a response regulator (RR). In plants, the His-to-Asp phosphorelay involves an additional intermediate named Histidine-containing phosphotransfer protein (HPt). This multistep phosphorelay consists of a His-Asp-His-Asp sequential transfer of a phosphate group between first a His and an Asp of the HK protein, followed by the transfer to a conserved His of the HPt protein and finally the transfer to an Asp in the receiver domain of the RR protein.

In terms of biological role, functions as a response regulator involved in His-to-Asp phosphorelay signal transduction system. Phosphorylation of the Asp residue in the receiver domain activates the ability of the protein to promote the transcription of target genes. Type-A response regulators seem to act as negative regulators of the cytokinin signaling. In Oryza sativa subsp. indica (Rice), this protein is Two-component response regulator ORR11.